Consider the following 190-residue polypeptide: MPRANEIKKGMVLNYNGKLLIVKNIDIQSPSARGAATLYKMRFSDVRTGLKVEERFKGDDIVDTVTLTRRFVDFSYVDGNEYVFMDKEDYTPYTFTKEQIEEELQFIPEGGMPDMQVLTWDGQLLALELPQTVDLEIIETAPGIKGASASSRTKPATMSTGLVIQVPEYLTTGEKIRIHIEECRYMGRAD.

The protein belongs to the elongation factor P family.

This chain is Elongation factor P-like protein, found in Klebsiella pneumoniae (strain 342).